The sequence spans 127 residues: MRKPRVTLRHLAWSTMLLMVLGTGMLFWSAVRQQESTLAIRSIHQGASMPDGFSIWHHLDAHGIRFKSITPENDTLLITFDSSAQSAAAKAVLDKTLPRGYIIAQRENASQAVQWLSRLRDAPHRMG.

Topologically, residues 1–11 (MRKPRVTLRHL) are cytoplasmic. Residues 12-31 (AWSTMLLMVLGTGMLFWSAV) form a helical membrane-spanning segment. The Periplasmic segment spans residues 32 to 127 (RQQESTLAIR…RLRDAPHRMG (96 aa)).

It belongs to the MzrA family. As to quaternary structure, interacts with EnvZ.

It localises to the cell inner membrane. Modulates the activity of the EnvZ/OmpR two-component regulatory system, probably by directly modulating EnvZ enzymatic activity and increasing stability of phosphorylated OmpR. The protein is Modulator protein MzrA of Citrobacter rodentium (strain ICC168) (Citrobacter freundii biotype 4280).